Consider the following 177-residue polypeptide: Cell division protein ZapC (177 aa).

Belongs to the ZapC family. As to quaternary structure, interacts directly with FtsZ.

The protein localises to the cytoplasm. Functionally, contributes to the efficiency of the cell division process by stabilizing the polymeric form of the cell division protein FtsZ. Acts by promoting interactions between FtsZ protofilaments and suppressing the GTPase activity of FtsZ. In Shewanella oneidensis (strain ATCC 700550 / JCM 31522 / CIP 106686 / LMG 19005 / NCIMB 14063 / MR-1), this protein is Cell division protein ZapC.